The primary structure comprises 476 residues: MGIKFLEVIKPFCAVLPEIQKPERKIQFREKVLWTAITLFIFLVCCQIPLFGIMSSDSADPFYWMRVILASNRGTLMELGISPIVTSDLIMQLLAGAKIIEVGDSPKDRALFNGAQKLFGMIITIGQAIVYVMTGMYGDPSEMGAGICLVIIIQLFVAGLIVLLLDELLQKGYGLGSGISLLIATNICETIVWKAFSPTTVNTGRGTEFEGAIIALFHLLATRTDKVRALREAFYRQNLPNLMNLIATVFVFAVVIYFQGFRVDLPIKSARYRGQYNTYPIKLFYTSNIPIILQSALVSNLYVISQMLSTRFSGNFIVNLLGTWSDTSTGGPARAYPVGGLCYFLSPPESFGSVLDDPVHAAIYIVFMLGSCAFFSKTWIEVSGSSAKDVAKQLKEQQMVMRGHRETSMVHELNRYIPTAAAFGGLCIGGLSVMADFLGAIGSGTGILLAVTIIYQYFEIFVKEQSEMGSMGGLFF.

Over 2-33 the chain is Cytoplasmic; sequence GIKFLEVIKPFCAVLPEIQKPERKIQFREKVL. A helical membrane pass occupies residues 34 to 53; that stretch reads WTAITLFIFLVCCQIPLFGI. Residues 54 to 76 lie on the Lumenal side of the membrane; sequence MSSDSADPFYWMRVILASNRGTL. Residues 77–96 form a helical membrane-spanning segment; that stretch reads MELGISPIVTSDLIMQLLAG. Over 97-117 the chain is Cytoplasmic; that stretch reads AKIIEVGDSPKDRALFNGAQK. Residues 118 to 138 form a helical membrane-spanning segment; that stretch reads LFGMIITIGQAIVYVMTGMYG. Over 139–144 the chain is Lumenal; the sequence is DPSEMG. The chain crosses the membrane as a helical span at residues 145-165; it reads AGICLVIIIQLFVAGLIVLLL. The Cytoplasmic portion of the chain corresponds to 166–172; that stretch reads DELLQKG. The chain crosses the membrane as a helical span at residues 173–193; that stretch reads YGLGSGISLLIATNICETIVW. The Lumenal portion of the chain corresponds to 194–240; that stretch reads KAFSPTTVNTGRGTEFEGAIIALFHLLATRTDKVRALREAFYRQNLP. A helical transmembrane segment spans residues 241–261; it reads NLMNLIATVFVFAVVIYFQGF. Topologically, residues 262–288 are cytoplasmic; it reads RVDLPIKSARYRGQYNTYPIKLFYTSN. Residues 289–309 traverse the membrane as a helical segment; sequence IPIILQSALVSNLYVISQMLS. The Lumenal portion of the chain corresponds to 310-354; it reads TRFSGNFIVNLLGTWSDTSTGGPARAYPVGGLCYFLSPPESFGSV. A helical transmembrane segment spans residues 355–375; that stretch reads LDDPVHAAIYIVFMLGSCAFF. At 376 to 420 the chain is on the cytoplasmic side; it reads SKTWIEVSGSSAKDVAKQLKEQQMVMRGHRETSMVHELNRYIPTA. Residues 421–441 form a helical membrane-spanning segment; it reads AAFGGLCIGGLSVMADFLGAI. Over 442–445 the chain is Lumenal; sequence GSGT. Residues 446–462 form a helical membrane-spanning segment; the sequence is GILLAVTIIYQYFEIFV. At 463–476 the chain is on the cytoplasmic side; the sequence is KEQSEMGSMGGLFF.

Belongs to the SecY/SEC61-alpha family. The SEC61 channel-forming translocon complex consists of channel-forming core components SEC61A1, SEC61B and SEC61G and different auxiliary components such as SEC62 and SEC63. The SEC61 channel associates with the multi-pass translocon (MPT) complex.

The protein resides in the endoplasmic reticulum membrane. Functionally, component of SEC61 channel-forming translocon complex that mediates transport of signal peptide-containing precursor polypeptides across the endoplasmic reticulum (ER). Forms a ribosome receptor and a gated pore in the ER membrane, both functions required for cotranslational translocation of nascent polypeptides. May cooperate with auxiliary protein SEC62, SEC63 and HSPA5/BiP to enable post-translational transport of small presecretory proteins. The SEC61 channel is also involved in ER membrane insertion of transmembrane proteins: it mediates membrane insertion of the first few transmembrane segments of proteins, while insertion of subsequent transmembrane regions of multi-pass membrane proteins is mediated by the multi-pass translocon (MPT) complex. This is Protein transport protein Sec61 subunit alpha (sec61a) from Boreogadus saida (Polar cod).